A 346-amino-acid chain; its full sequence is Histone PARylation factor 1 (346 aa).

Met-1 bears the N-acetylmethionine mark. Residues 1 to 23 (MVGGGGKRRPGGEGPQCEKTTDV) form a disordered region. Residue Lys-19 is modified to N6-acetyllysine. At Ser-97 the chain carries ADP-ribosylserine. Lys-186 and Lys-233 each carry N6-acetyllysine. At Asp-235 the chain carries PolyADP-ribosyl aspartic acid. Position 238 is an ADP-ribosyltyrosine (Tyr-238). Glu-240 is modified (polyADP-ribosyl glutamic acid). The interval 242 to 346 (PETDADLKRI…SQENIDQLAA (105 aa)) is interaction with PARP1. The active-site Proton donor is Glu-284.

The protein belongs to the HPF1 family. In terms of assembly, interacts with PARP1 (via the PARP catalytic domain). Interacts with PARP2 (via the PARP catalytic domain). Interacts with core nucleosomes in a PARP1- and PARP2-dependent manner.

It is found in the chromosome. Its subcellular location is the nucleus. Cofactor for serine ADP-ribosylation that confers serine specificity on PARP1 and PARP2 and plays a key role in DNA damage response. Initiates the repair of double-strand DNA breaks: recruited to DNA damage sites by PARP1 and PARP2 and switches the amino acid specificity of PARP1 and PARP2 from aspartate or glutamate to serine residues, licensing serine ADP-ribosylation of target proteins. Serine ADP-ribosylation of target proteins, such as histones, promotes decompaction of chromatin and the recruitment of repair factors leading to the reparation of DNA strand breaks. Serine ADP-ribosylation of proteins constitutes the primary form of ADP-ribosylation of proteins in response to DNA damage. HPF1 acts by completing the active site of PARP1 and PARP2: forms a composite active site composed of residues from HPF1 and PARP1 or PARP2. While HPF1 promotes the initiation of serine ADP-ribosylation, it restricts the polymerase activity of PARP1 and PARP2 in order to limit the length of poly-ADP-ribose chains. HPF1 also promotes tyrosine ADP-ribosylation, probably by conferring tyrosine specificity on PARP1. The sequence is that of Histone PARylation factor 1 from Homo sapiens (Human).